A 918-amino-acid polypeptide reads, in one-letter code: Protein translocase subunit SecA (918 aa).

Residues Gln87, 105–109 (GEGKT), and Asp516 contribute to the ATP site. Zn(2+) contacts are provided by Cys902, Cys904, Cys913, and His914.

Belongs to the SecA family. As to quaternary structure, monomer and homodimer. Part of the essential Sec protein translocation apparatus which comprises SecA, SecYEG and auxiliary proteins SecDF-YajC and YidC. Requires Zn(2+) as cofactor.

Its subcellular location is the cell inner membrane. It localises to the cytoplasm. The enzyme catalyses ATP + H2O + cellular proteinSide 1 = ADP + phosphate + cellular proteinSide 2.. Part of the Sec protein translocase complex. Interacts with the SecYEG preprotein conducting channel. Has a central role in coupling the hydrolysis of ATP to the transfer of proteins into and across the cell membrane, serving both as a receptor for the preprotein-SecB complex and as an ATP-driven molecular motor driving the stepwise translocation of polypeptide chains across the membrane. The polypeptide is Protein translocase subunit SecA (Methylibium petroleiphilum (strain ATCC BAA-1232 / LMG 22953 / PM1)).